Here is a 621-residue protein sequence, read N- to C-terminus: tRNA uridine 5-carboxymethylaminomethyl modification enzyme MnmG (621 aa).

8–13 (GAGHAG) contacts FAD. The disordered stretch occupies residues 199 to 227 (PRIDRRSVDYSRVEEQKGDENPPPFSFST). Basic and acidic residues predominate over residues 200-218 (RIDRRSVDYSRVEEQKGDE). 269-283 (GPRYCPSIEDKIFRF) is an NAD(+) binding site.

It belongs to the MnmG family. As to quaternary structure, homodimer. Heterotetramer of two MnmE and two MnmG subunits. Requires FAD as cofactor.

It localises to the cytoplasm. NAD-binding protein involved in the addition of a carboxymethylaminomethyl (cmnm) group at the wobble position (U34) of certain tRNAs, forming tRNA-cmnm(5)s(2)U34. In Chlorobium luteolum (strain DSM 273 / BCRC 81028 / 2530) (Pelodictyon luteolum), this protein is tRNA uridine 5-carboxymethylaminomethyl modification enzyme MnmG.